Reading from the N-terminus, the 275-residue chain is Peptidoglycan-N-acetylglucosamine deacetylase BC_1960 (275 aa).

Residues 81 to 262 (AEVALTFDDG…QLKTKGARFV (182 aa)) enclose the NodB homology domain. D88 functions as the Proton acceptor in the catalytic mechanism. 3 residues coordinate Zn(2+): D89, H139, and H143. Residue P179 is modified to 2-hydroxyproline; partial. H233 functions as the Proton donor in the catalytic mechanism.

The protein belongs to the polysaccharide deacetylase family. Requires Zn(2+) as cofactor. In terms of processing, hydroxylated on Pro-179. Hydroxylation alters the active site and enhances significantly deacetylase activity, probably by creating a more favorable environment for transition-state stabilization. It might be autocatalytic.

The enzyme catalyses peptidoglycan-N-acetyl-D-glucosamine + H2O = peptidoglycan-D-glucosamine + acetate.. With respect to regulation, deacetylase activity is stimulated by hydroxylation on Pro-179. Inhibited by CuCl(2) and ZnCl(2). Inhibited by the hydroxamate N-hydroxy-4-(naphthalene-1-yl)benzamide (NHNB). Its function is as follows. Catalyzes the deacetylation of N-acetylglucosamine (GlcNAc) residues in peptidoglycan. Also acts on soluble chitin substrates and N-acetylchitooligomers. Acts on cell wall peptidoglycan from the Gram-positive bacteria B.cereus and B.subtilis and the Gram-negative bacterium H.pylori. Not active on acetylated xylan. The sequence is that of Peptidoglycan-N-acetylglucosamine deacetylase BC_1960 from Bacillus cereus (strain ATCC 14579 / DSM 31 / CCUG 7414 / JCM 2152 / NBRC 15305 / NCIMB 9373 / NCTC 2599 / NRRL B-3711).